A 200-amino-acid polypeptide reads, in one-letter code: NADH-quinone oxidoreductase subunit C (200 aa).

Belongs to the complex I 30 kDa subunit family. NDH-1 is composed of 14 different subunits. Subunits NuoB, C, D, E, F, and G constitute the peripheral sector of the complex.

The protein resides in the cell inner membrane. It catalyses the reaction a quinone + NADH + 5 H(+)(in) = a quinol + NAD(+) + 4 H(+)(out). Its function is as follows. NDH-1 shuttles electrons from NADH, via FMN and iron-sulfur (Fe-S) centers, to quinones in the respiratory chain. The immediate electron acceptor for the enzyme in this species is believed to be ubiquinone. Couples the redox reaction to proton translocation (for every two electrons transferred, four hydrogen ions are translocated across the cytoplasmic membrane), and thus conserves the redox energy in a proton gradient. This chain is NADH-quinone oxidoreductase subunit C, found in Parvibaculum lavamentivorans (strain DS-1 / DSM 13023 / NCIMB 13966).